We begin with the raw amino-acid sequence, 561 residues long: Dihydroxy-acid dehydratase (561 aa).

C50 is a binding site for [2Fe-2S] cluster. D82 lines the Mg(2+) pocket. C123 is a [2Fe-2S] cluster binding site. Mg(2+)-binding residues include D124 and K125. The residue at position 125 (K125) is an N6-carboxylysine. C195 serves as a coordination point for [2Fe-2S] cluster. E447 lines the Mg(2+) pocket. The active-site Proton acceptor is the S473.

The protein belongs to the IlvD/Edd family. Homodimer. Requires [2Fe-2S] cluster as cofactor. The cofactor is Mg(2+).

It catalyses the reaction (2R)-2,3-dihydroxy-3-methylbutanoate = 3-methyl-2-oxobutanoate + H2O. It carries out the reaction (2R,3R)-2,3-dihydroxy-3-methylpentanoate = (S)-3-methyl-2-oxopentanoate + H2O. The protein operates within amino-acid biosynthesis; L-isoleucine biosynthesis; L-isoleucine from 2-oxobutanoate: step 3/4. It participates in amino-acid biosynthesis; L-valine biosynthesis; L-valine from pyruvate: step 3/4. Functionally, functions in the biosynthesis of branched-chain amino acids. Catalyzes the dehydration of (2R,3R)-2,3-dihydroxy-3-methylpentanoate (2,3-dihydroxy-3-methylvalerate) into 2-oxo-3-methylpentanoate (2-oxo-3-methylvalerate) and of (2R)-2,3-dihydroxy-3-methylbutanoate (2,3-dihydroxyisovalerate) into 2-oxo-3-methylbutanoate (2-oxoisovalerate), the penultimate precursor to L-isoleucine and L-valine, respectively. The sequence is that of Dihydroxy-acid dehydratase from Rippkaea orientalis (strain PCC 8801 / RF-1) (Cyanothece sp. (strain PCC 8801)).